A 1374-amino-acid polypeptide reads, in one-letter code: DNA-directed RNA polymerase subunit beta' (1374 aa).

The Zn(2+) site is built by cysteine 71, cysteine 73, cysteine 86, and cysteine 89. Residues aspartate 462, aspartate 464, and aspartate 466 each coordinate Mg(2+). Zn(2+)-binding residues include cysteine 810, cysteine 884, cysteine 891, and cysteine 894.

The protein belongs to the RNA polymerase beta' chain family. As to quaternary structure, the RNAP catalytic core consists of 2 alpha, 1 beta, 1 beta' and 1 omega subunit. When a sigma factor is associated with the core the holoenzyme is formed, which can initiate transcription. Mg(2+) serves as cofactor. Requires Zn(2+) as cofactor.

It carries out the reaction RNA(n) + a ribonucleoside 5'-triphosphate = RNA(n+1) + diphosphate. DNA-dependent RNA polymerase catalyzes the transcription of DNA into RNA using the four ribonucleoside triphosphates as substrates. This chain is DNA-directed RNA polymerase subunit beta', found in Rickettsia massiliae (strain Mtu5).